Reading from the N-terminus, the 117-residue chain is Antitoxin RelB3 (117 aa).

In terms of biological role, antitoxin component of a type II toxin-antitoxin (TA) system. Neutralizes the effect of cognate toxin RelE3, but no other RelE or ParE toxin. This chain is Antitoxin RelB3 (relB3), found in Caulobacter vibrioides (strain ATCC 19089 / CIP 103742 / CB 15) (Caulobacter crescentus).